Here is a 161-residue protein sequence, read N- to C-terminus: Protein OPG060 (161 aa).

Belongs to the orthopoxvirus OPG058 family.

The polypeptide is Protein OPG060 (OPG060) (Homo sapiens (Human)).